Reading from the N-terminus, the 265-residue chain is Imidazole glycerol phosphate synthase subunit HisF (265 aa).

Active-site residues include aspartate 12 and aspartate 131.

This sequence belongs to the HisA/HisF family. As to quaternary structure, heterodimer of HisH and HisF.

Its subcellular location is the cytoplasm. It catalyses the reaction 5-[(5-phospho-1-deoxy-D-ribulos-1-ylimino)methylamino]-1-(5-phospho-beta-D-ribosyl)imidazole-4-carboxamide + L-glutamine = D-erythro-1-(imidazol-4-yl)glycerol 3-phosphate + 5-amino-1-(5-phospho-beta-D-ribosyl)imidazole-4-carboxamide + L-glutamate + H(+). It participates in amino-acid biosynthesis; L-histidine biosynthesis; L-histidine from 5-phospho-alpha-D-ribose 1-diphosphate: step 5/9. In terms of biological role, IGPS catalyzes the conversion of PRFAR and glutamine to IGP, AICAR and glutamate. The HisF subunit catalyzes the cyclization activity that produces IGP and AICAR from PRFAR using the ammonia provided by the HisH subunit. This is Imidazole glycerol phosphate synthase subunit HisF from Alkalilimnicola ehrlichii (strain ATCC BAA-1101 / DSM 17681 / MLHE-1).